The chain runs to 156 residues: Protein archease-like (156 aa).

Residues D25, D155, and I156 each contribute to the Ca(2+) site.

The protein belongs to the archease family.

Its function is as follows. Component of the tRNA-splicing ligase complex required to facilitate the enzymatic turnover of catalytic subunit RtcB. Plays an important role in a RNA repair and splicing pathway which controls axon regeneration in response to peripheral (PNS) and central nervous system (CNS) injury, by activating splicing of Xbp1 to promote axon regeneration in response to axotomy. The protein is Protein archease-like of Drosophila melanogaster (Fruit fly).